A 98-amino-acid chain; its full sequence is uncharacterized protein (98 aa).

A run of 2 helical transmembrane segments spans residues 8–28 (LILK…HYFL) and 73–93 (LWFI…SISL).

It is found in the membrane. This is an uncharacterized protein from Saccharomyces cerevisiae (strain ATCC 204508 / S288c) (Baker's yeast).